The primary structure comprises 566 residues: Membrane protein insertase YidC (566 aa).

5 consecutive transmembrane segments (helical) span residues 3–23, 346–366, 369–389, 436–456, and 509–529; these read IKRI…FNAW, GWLW…HAVV, WGWS…WFSA, GGCL…YVII, and MWIL…GLVL.

This sequence belongs to the OXA1/ALB3/YidC family. Type 1 subfamily. In terms of assembly, interacts with the Sec translocase complex via SecD. Specifically interacts with transmembrane segments of nascent integral membrane proteins during membrane integration.

Its subcellular location is the cell inner membrane. Functionally, required for the insertion and/or proper folding and/or complex formation of integral membrane proteins into the membrane. Involved in integration of membrane proteins that insert both dependently and independently of the Sec translocase complex, as well as at least some lipoproteins. Aids folding of multispanning membrane proteins. This is Membrane protein insertase YidC from Coxiella burnetii (strain Dugway 5J108-111).